Reading from the N-terminus, the 668-residue chain is WD repeat-containing protein 48 homolog (668 aa).

WD repeat units lie at residues 26 to 65 (QHRN…SEKY), 71 to 110 (HHND…CMST), 113 to 152 (THRD…ALTA), 164 to 203 (GSKD…RRMK), 206 to 245 (GHTE…CVQT), 248 to 287 (VHKE…NKTL), 290 to 329 (EEQA…RCTL), and 350 to 389 (KGGA…KKEQ). The interval 592-616 (ETTPSGGNANNSLQNSQSDANSEGS) is disordered.

It belongs to the WD repeat WDR48 family. In terms of assembly, catalytic component of the Usp12-46 deubiquitylase complex consisting of Usp12-46, Wdr20 and Uaf1; regulatory subunit that, together wtih Wdr20, stabilizes Usp12-46. The Usp12-46 deubiquitylase complex associates with arr/arrow; the interaction leads to deubiquitination and stabilization of arr/arrow.

In terms of biological role, regulatory component of the Usp12-46 deubiquitylase complex. activates deubiquitination by increasing the catalytic turnover without increasing the affinity of deubiquitinating enzymes for the substrate. The complex deubiquitylates the wg/wingless-signaling receptor arr/arrow, which stabilizes the receptor and increases its concentration at the cell surface; this enhances the sensitivity of cells to wg/wingless-signal stimulation. This increases the amplitude and spatial range of the signaling response to the wg/wingless morphogen gradient, facilitating the precise concentration-dependent regulation of its target genes. Together with Wdr20 and Usp12-46 required for wg/wingless-mediated signaling in the wing imaginal disc and for wg/wingless-dependent regulation of intestinal stem cell proliferation. The sequence is that of WD repeat-containing protein 48 homolog from Drosophila melanogaster (Fruit fly).